The sequence spans 774 residues: Transcription factor MBS1 (774 aa).

An HTH APSES-type domain is found at 37 to 143; it reads EITFYDSGVP…YVPTSVSPPP (107 aa). A DNA-binding region (H-T-H motif) is located at residues 68–89; sequence ATQILKVAGFDKPQRTRVLERE. 2 disordered regions span residues 135-180 and 209-229; these read VPTS…SAAA and RVSL…VASV. The segment covering 155-165 has biased composition (basic and acidic residues); the sequence is ARRDKEKETGR. Residues 166 to 176 show a composition bias toward polar residues; that stretch reads TKATPSRTGPT. ANK repeat units follow at residues 348-377 and 467-496; these read DGHT…SIFA and EGET…NPKI. Residues 752–774 form a disordered region; sequence EEENDNQVYNTSAGESGPSSWVQ. A compositionally biased stretch (polar residues) spans 757 to 774; the sequence is NQVYNTSAGESGPSSWVQ.

The protein resides in the nucleus. Transcription factor that positively regulates ergosterol biosynthesis and thereby affects polyene and azole drug susceptibility. Plays a role in maintenance of membrane stability and osmotic stress response. Involved in genotoxic and oxidative stress responses. Also promotes production of melanin and capsule and thereby is required for full virulence. This Cryptococcus neoformans var. grubii serotype A (strain H99 / ATCC 208821 / CBS 10515 / FGSC 9487) (Filobasidiella neoformans var. grubii) protein is Transcription factor MBS1.